The sequence spans 671 residues: UvrABC system protein C (671 aa).

In terms of domain architecture, GIY-YIG spans 16–95; sequence TTPGVYRFRD…IKEFKPRFNV (80 aa). Residues 207-242 form the UVR domain; the sequence is KRFISRLEKDMAAAVAELDYERAAGLRDDIIALRKV.

It belongs to the UvrC family. In terms of assembly, interacts with UvrB in an incision complex.

The protein resides in the cytoplasm. The UvrABC repair system catalyzes the recognition and processing of DNA lesions. UvrC both incises the 5' and 3' sides of the lesion. The N-terminal half is responsible for the 3' incision and the C-terminal half is responsible for the 5' incision. This Paenarthrobacter aurescens (strain TC1) protein is UvrABC system protein C.